We begin with the raw amino-acid sequence, 426 residues long: MSKQIQAIRGMNDCLPEQSGLWQWAEKAIREVVASYGYQEVRTPIVESTDLFKRSIGEVTDIVEKEMYTFADRNDDSLTLRPEGTASVVRAGNEHGLLYNQQQRLWYLGPMFRHERPQKGRYRQFHQFGVEVFGLAGPDIDAEVIALSARLWKKFGISEQVTLELNSLGSNEARETYRKALVEFLLARKEHLDEDSLRRLESNPLRVLDSKNPQVQAAITDAPSLIDYLDAESKEHFHALCERLDALGIQYRVNPRLVRGLDYYNRTVFEWVTDSLGAQGTVCAGGRYDGLVEQLGGKSTQGVGFAIGMERLVLMLQASGAEEFVASPVDVYVTAMGDEVELYALQIAESLRDVMPTLRVQTHFGGGNFKKQMKRADKSAARVALVLGETEQQEEQVSIKFLREDKPQSRIARSELESTLVELFSL.

It belongs to the class-II aminoacyl-tRNA synthetase family. As to quaternary structure, homodimer.

Its subcellular location is the cytoplasm. The catalysed reaction is tRNA(His) + L-histidine + ATP = L-histidyl-tRNA(His) + AMP + diphosphate + H(+). This chain is Histidine--tRNA ligase, found in Pseudoalteromonas atlantica (strain T6c / ATCC BAA-1087).